Consider the following 75-residue polypeptide: Large ribosomal subunit protein bL31 (75 aa).

This sequence belongs to the bacterial ribosomal protein bL31 family. Type A subfamily. Part of the 50S ribosomal subunit.

In terms of biological role, binds the 23S rRNA. The protein is Large ribosomal subunit protein bL31 of Rhodopseudomonas palustris (strain BisB5).